The primary structure comprises 157 residues: Ribosome-binding factor A (157 aa).

Positions 127–157 are disordered; it reads QQQFGSEEASVEDEVLGDDVADDADETEGKD. Positions 135–157 are enriched in acidic residues; it reads ASVEDEVLGDDVADDADETEGKD.

The protein belongs to the RbfA family. Monomer. Binds 30S ribosomal subunits, but not 50S ribosomal subunits or 70S ribosomes.

The protein localises to the cytoplasm. Its function is as follows. One of several proteins that assist in the late maturation steps of the functional core of the 30S ribosomal subunit. Associates with free 30S ribosomal subunits (but not with 30S subunits that are part of 70S ribosomes or polysomes). Required for efficient processing of 16S rRNA. May interact with the 5'-terminal helix region of 16S rRNA. In Shewanella baltica (strain OS195), this protein is Ribosome-binding factor A.